Consider the following 271-residue polypeptide: Phosphoglycerate mutase-like protein (271 aa).

The Tele-phosphohistidine intermediate role is filled by His22. The active-site Proton donor/acceptor is Glu134. The interval 252 to 271 (SAETTNYPGKVPEGLDNPSG) is disordered.

The protein belongs to the phosphoglycerate mutase family. As to expression, expressed in the shoot apical meristem and meristematic zone of the root tips.

In terms of biological role, may play a role in carbohydrates metabolism. This is Phosphoglycerate mutase-like protein from Arabidopsis thaliana (Mouse-ear cress).